The primary structure comprises 388 residues: Putative pyridoxal phosphate-dependent aminotransferase EpsN (388 aa).

An N6-(pyridoxal phosphate)lysine modification is found at lysine 190.

This sequence belongs to the DegT/DnrJ/EryC1 family. Pyridoxal 5'-phosphate is required as a cofactor.

May be involved in the production of the exopolysaccharide (EPS) component of the extracellular matrix during biofilm formation. EPS is responsible for the adhesion of chains of cells into bundles. The sequence is that of Putative pyridoxal phosphate-dependent aminotransferase EpsN (epsN) from Bacillus subtilis (strain 168).